Reading from the N-terminus, the 393-residue chain is Putative mitochondrial cysteine synthase (393 aa).

A helical membrane pass occupies residues 12–31 (LAWRECISIASVLIGAYASY). N6-(pyridoxal phosphate)lysine is present on Lys-86. Pyridoxal 5'-phosphate-binding positions include 230–234 (GTGGT) and Ser-338.

It belongs to the cysteine synthase/cystathionine beta-synthase family. Requires pyridoxal 5'-phosphate as cofactor.

The protein resides in the mitochondrion. The protein localises to the mitochondrion outer membrane. The catalysed reaction is O-acetyl-L-serine + hydrogen sulfide = L-cysteine + acetate. Functionally, putative cysteine synthase that catalyzes the conversion of O-acetyl-L-serine (OAS) into cysteine, the last step in the cysteine biosynthesis pathway. However, this CS-like protein is unlikely to function in cysteine biosynthesis. It seems that in S.cerevisiae cysteine biosynthesis occurs exclusively through the cystathionine pathway and not via direct incorporation of sulfur into OAS. In Saccharomyces cerevisiae (strain ATCC 204508 / S288c) (Baker's yeast), this protein is Putative mitochondrial cysteine synthase.